We begin with the raw amino-acid sequence, 145 residues long: 3-hydroxyacyl-[acyl-carrier-protein] dehydratase FabZ (145 aa).

Residue His-51 is part of the active site.

It belongs to the thioester dehydratase family. FabZ subfamily.

The protein resides in the cytoplasm. It carries out the reaction a (3R)-hydroxyacyl-[ACP] = a (2E)-enoyl-[ACP] + H2O. Functionally, involved in unsaturated fatty acids biosynthesis. Catalyzes the dehydration of short chain beta-hydroxyacyl-ACPs and long chain saturated and unsaturated beta-hydroxyacyl-ACPs. This chain is 3-hydroxyacyl-[acyl-carrier-protein] dehydratase FabZ, found in Staphylococcus carnosus (strain TM300).